Consider the following 130-residue polypeptide: Small ribosomal subunit protein uS8 (130 aa).

This sequence belongs to the universal ribosomal protein uS8 family. In terms of assembly, part of the 30S ribosomal subunit.

One of the primary rRNA binding proteins, it binds directly to 16S rRNA central domain where it helps coordinate assembly of the platform of the 30S subunit. The protein is Small ribosomal subunit protein uS8 of Thermococcus sibiricus (strain DSM 12597 / MM 739).